A 228-amino-acid chain; its full sequence is Translin (228 aa).

Residues 86–90 (RFHEH) are DNA/RNA binding. The segment at 177-198 (LDSGFRLLNLKNDSLRKRYDGL) is leucine-zipper. The residue at position 187 (K187) is an N6-acetyllysine. At S190 the chain carries Phosphoserine. K199 bears the N6-acetyllysine mark.

This sequence belongs to the translin family. As to quaternary structure, ring-shaped heterooctamer of six TSN and two TSNAX subunits, DNA/RNA binding occurs inside the ring.

It is found in the cytoplasm. It localises to the nucleus. DNA-binding protein that specifically recognizes consensus sequences at the breakpoint junctions in chromosomal translocations, mostly involving immunoglobulin (Ig)/T-cell receptor gene segments. Seems to recognize single-stranded DNA ends generated by staggered breaks occurring at recombination hot spots. Its function is as follows. Exhibits both single-stranded and double-stranded endoribonuclease activity. May act as an activator of RNA-induced silencing complex (RISC) by facilitating endonucleolytic cleavage of the siRNA passenger strand. In Mus musculus (Mouse), this protein is Translin (Tsn).